Consider the following 77-residue polypeptide: Large ribosomal subunit protein bL28 (77 aa).

A disordered region spans residues 1-25 (MARVCQVTGKAPMSGNNVSHANNKT).

It belongs to the bacterial ribosomal protein bL28 family.

In Paraburkholderia xenovorans (strain LB400), this protein is Large ribosomal subunit protein bL28.